The sequence spans 344 residues: GTP 3',8-cyclase (344 aa).

The Radical SAM core domain occupies 19–244 (PFGRTISYLR…MDLAESTGGP (226 aa)). Arg28 lines the GTP pocket. 2 residues coordinate [4Fe-4S] cluster: Cys35 and Cys39. Residue Tyr41 participates in S-adenosyl-L-methionine binding. Residue Cys42 participates in [4Fe-4S] cluster binding. Residue Arg77 participates in GTP binding. Residue Gly81 coordinates S-adenosyl-L-methionine. Thr111 lines the GTP pocket. Ser135 serves as a coordination point for S-adenosyl-L-methionine. GTP is bound at residue Lys171. Met205 contacts S-adenosyl-L-methionine. Residues Cys268 and Cys271 each contribute to the [4Fe-4S] cluster site. 273–275 (RVR) is a binding site for GTP. Cys285 lines the [4Fe-4S] cluster pocket.

It belongs to the radical SAM superfamily. MoaA family. As to quaternary structure, monomer and homodimer. [4Fe-4S] cluster serves as cofactor.

The enzyme catalyses GTP + AH2 + S-adenosyl-L-methionine = (8S)-3',8-cyclo-7,8-dihydroguanosine 5'-triphosphate + 5'-deoxyadenosine + L-methionine + A + H(+). The protein operates within cofactor biosynthesis; molybdopterin biosynthesis. Functionally, catalyzes the cyclization of GTP to (8S)-3',8-cyclo-7,8-dihydroguanosine 5'-triphosphate. This is GTP 3',8-cyclase from Bradyrhizobium diazoefficiens (strain JCM 10833 / BCRC 13528 / IAM 13628 / NBRC 14792 / USDA 110).